Here is a 370-residue protein sequence, read N- to C-terminus: MAFRRRTKSYPLFSQEFVIHNHADIGFCLVLCVLIGLMFEVTAKTAFLFILPQYNISVPTADSETVHYHYGPKDLVTILFYIFITIILHAVVQEYILDKISKRLHLSKVKHSKFNESGQLVVFHFTSVIWCFYVVVTEGYLTNPRSLWEDYPHVHLPFQVKFFYLCQLAYWLHALPELYFQKVRKEEIPRQLQYICLYLVHIAGAYLLNLSRLGLILLLLQYSTEFLFHTARLFYFADENNEKLFSAWAAVFGVTRLFILTLAVLAIGFGLARMENQAFDPEKGNFNTLFCRLCVLLLVCAAQAWLMWRFIHSQLRHWREYWNEQSAKRRVPATPRLPARLIKRESGYHENGVVKAENGTSPRTKKLKSP.

At 1-22 the chain is on the cytoplasmic side; the sequence is MAFRRRTKSYPLFSQEFVIHNH. The helical transmembrane segment at 23–43 threads the bilayer; it reads ADIGFCLVLCVLIGLMFEVTA. At 44–75 the chain is on the extracellular side; sequence KTAFLFILPQYNISVPTADSETVHYHYGPKDL. A glycan (N-linked (GlcNAc...) asparagine) is linked at asparagine 55. A helical transmembrane segment spans residues 76-96; sequence VTILFYIFITIILHAVVQEYI. Over 97 to 119 the chain is Cytoplasmic; sequence LDKISKRLHLSKVKHSKFNESGQ. The 210-residue stretch at 112-321 folds into the TLC domain; sequence SKFNESGQLV…HSQLRHWREY (210 aa). A helical membrane pass occupies residues 120–140; it reads LVVFHFTSVIWCFYVVVTEGY. The Extracellular portion of the chain corresponds to 141–159; the sequence is LTNPRSLWEDYPHVHLPFQ. The chain crosses the membrane as a helical span at residues 160–180; it reads VKFFYLCQLAYWLHALPELYF. Residues 181-191 are Cytoplasmic-facing; sequence QKVRKEEIPRQ. A helical transmembrane segment spans residues 192-209; that stretch reads LQYICLYLVHIAGAYLLN. Residues 210 to 214 lie on the Extracellular side of the membrane; sequence LSRLG. The chain crosses the membrane as a helical span at residues 215-235; that stretch reads LILLLLQYSTEFLFHTARLFY. The Cytoplasmic portion of the chain corresponds to 236-250; the sequence is FADENNEKLFSAWAA. A helical transmembrane segment spans residues 251–271; it reads VFGVTRLFILTLAVLAIGFGL. The Extracellular portion of the chain corresponds to 272 to 287; it reads ARMENQAFDPEKGNFN. The chain crosses the membrane as a helical span at residues 288–308; it reads TLFCRLCVLLLVCAAQAWLMW. At 309–370 the chain is on the cytoplasmic side; it reads RFIHSQLRHW…SPRTKKLKSP (62 aa). The segment at 348–370 is disordered; the sequence is YHENGVVKAENGTSPRTKKLKSP.

It belongs to the TRAM family. Interacts with SERCA2B and COL1A1.

The protein localises to the membrane. Its function is as follows. Necessary for collagen type I synthesis. May couple the activity of the ER Ca(2+) pump SERCA2B with the activity of the translocon. This coupling may increase the local Ca(2+) concentration at the site of collagen synthesis, and a high Ca(2+) concentration may be necessary for the function of molecular chaperones involved in collagen folding. Required for proper insertion of the first transmembrane helix N-terminus of TM4SF20 into the ER lumen, may act as a ceramide sensor for regulated alternative translocation (RAT). The chain is Translocating chain-associated membrane protein 2 (TRAM2) from Homo sapiens (Human).